The sequence spans 138 residues: Acidic phospholipase A2 BE-I-PLA2 (138 aa).

The first 16 residues, 1-16, serve as a signal peptide directing secretion; the sequence is MRTLWIMAVLLVGVEG. 7 disulfide bridges follow: cysteine 42/cysteine 131, cysteine 44/cysteine 60, cysteine 59/cysteine 111, cysteine 65/cysteine 138, cysteine 66/cysteine 104, cysteine 73/cysteine 97, and cysteine 91/cysteine 102. Residues tyrosine 43, glycine 45, and glycine 47 each contribute to the Ca(2+) site. Histidine 63 is a catalytic residue. Aspartate 64 is a Ca(2+) binding site. Residue aspartate 105 is part of the active site.

This sequence belongs to the phospholipase A2 family. Group II subfamily. D49 sub-subfamily. The cofactor is Ca(2+). In terms of tissue distribution, expressed by the venom gland.

Its subcellular location is the secreted. It catalyses the reaction a 1,2-diacyl-sn-glycero-3-phosphocholine + H2O = a 1-acyl-sn-glycero-3-phosphocholine + a fatty acid + H(+). Its function is as follows. Snake venom phospholipase A2 that shows a potent inhibition of human platelet aggregation. This inhibition is concentration-dependent when aggregation is induced by collagen, and concentration-independent when aggregation is induced by arachidonic acid. In human umbilical-cord vein endothelial cells, this toxin stimulates endothelial cells to release prostaglandin I(2), suggesting an increase of its potential anti-platelet activity in vivo. PLA2 catalyzes the calcium-dependent hydrolysis of the 2-acyl groups in 3-sn-phosphoglycerides. The sequence is that of Acidic phospholipase A2 BE-I-PLA2 from Bothrops erythromelas (Caatinga lance head).